The following is a 132-amino-acid chain: UPF0299 membrane protein KPN78578_25390 (132 aa).

Helical transmembrane passes span 5–25 (LTII…LYAG), 38–60 (GSII…PQWV), 66–86 (ILIR…MQYW), and 93–113 (LGPV…VVSW).

The protein belongs to the UPF0299 family.

The protein resides in the cell inner membrane. This Klebsiella pneumoniae subsp. pneumoniae (strain ATCC 700721 / MGH 78578) protein is UPF0299 membrane protein KPN78578_25390.